Reading from the N-terminus, the 261-residue chain is 14-3-3-like protein B (261 aa).

The tract at residues 237–261 (DIPEDGEDSQKANGTAKFGGGDDAE) is disordered.

This sequence belongs to the 14-3-3 family.

This chain is 14-3-3-like protein B, found in Vicia faba (Broad bean).